A 306-amino-acid chain; its full sequence is tRNA dimethylallyltransferase (306 aa).

14 to 21 (GPTAAGKS) contacts ATP. 16 to 21 (TAAGKS) contacts substrate. The interaction with substrate tRNA stretch occupies residues 39 to 42 (DSRL).

Belongs to the IPP transferase family. In terms of assembly, monomer. Mg(2+) is required as a cofactor.

It carries out the reaction adenosine(37) in tRNA + dimethylallyl diphosphate = N(6)-dimethylallyladenosine(37) in tRNA + diphosphate. Functionally, catalyzes the transfer of a dimethylallyl group onto the adenine at position 37 in tRNAs that read codons beginning with uridine, leading to the formation of N6-(dimethylallyl)adenosine (i(6)A). In Synechococcus elongatus (strain ATCC 33912 / PCC 7942 / FACHB-805) (Anacystis nidulans R2), this protein is tRNA dimethylallyltransferase.